A 571-amino-acid polypeptide reads, in one-letter code: Proline--tRNA ligase (571 aa).

This sequence belongs to the class-II aminoacyl-tRNA synthetase family. ProS type 1 subfamily. Homodimer.

The protein localises to the cytoplasm. It catalyses the reaction tRNA(Pro) + L-proline + ATP = L-prolyl-tRNA(Pro) + AMP + diphosphate. Functionally, catalyzes the attachment of proline to tRNA(Pro) in a two-step reaction: proline is first activated by ATP to form Pro-AMP and then transferred to the acceptor end of tRNA(Pro). As ProRS can inadvertently accommodate and process non-cognate amino acids such as alanine and cysteine, to avoid such errors it has two additional distinct editing activities against alanine. One activity is designated as 'pretransfer' editing and involves the tRNA(Pro)-independent hydrolysis of activated Ala-AMP. The other activity is designated 'posttransfer' editing and involves deacylation of mischarged Ala-tRNA(Pro). The misacylated Cys-tRNA(Pro) is not edited by ProRS. The protein is Proline--tRNA ligase of Actinobacillus succinogenes (strain ATCC 55618 / DSM 22257 / CCUG 43843 / 130Z).